Reading from the N-terminus, the 134-residue chain is METNKLYECTLIIDGGLQDEAIAAAMALVQRVITEKGGSISSVLEIGRRKTAYPIKKKTIGYYAHIEFTAATSVIAEVEKVIRYEEDLLRYLIIHLTSALLEMRKRVEKYSVVIGSPEDSALAEAAAASDTVAK.

The protein belongs to the bacterial ribosomal protein bS6 family.

Binds together with bS18 to 16S ribosomal RNA. The protein is Small ribosomal subunit protein bS6 of Pelodictyon phaeoclathratiforme (strain DSM 5477 / BU-1).